Reading from the N-terminus, the 334-residue chain is Ornithine carbamoyltransferase, catabolic (334 aa).

Residues 57–60, glutamine 84, arginine 108, and 135–138 each bind carbamoyl phosphate; these read STRT and HPTQ. Residues asparagine 168, aspartate 232, and 236–237 contribute to the L-ornithine site; that span reads SM. Residues 274–275 and arginine 320 each bind carbamoyl phosphate; that span reads CL.

This sequence belongs to the aspartate/ornithine carbamoyltransferase superfamily. OTCase family.

The protein resides in the cytoplasm. It carries out the reaction carbamoyl phosphate + L-ornithine = L-citrulline + phosphate + H(+). It participates in amino-acid degradation; L-arginine degradation via ADI pathway; carbamoyl phosphate from L-arginine: step 2/2. Functionally, reversibly catalyzes the transfer of the carbamoyl group from carbamoyl phosphate (CP) to the N(epsilon) atom of ornithine (ORN) to produce L-citrulline. The protein is Ornithine carbamoyltransferase, catabolic (arcB) of Rhizobium meliloti (strain 1021) (Ensifer meliloti).